We begin with the raw amino-acid sequence, 78 residues long: uncharacterized protein (78 aa).

The disordered stretch occupies residues 49 to 78 (QRASLERSNSIRNLQSQGKRRSDSKESRKL). Polar residues predominate over residues 54–65 (ERSNSIRNLQSQ). The span at 68-78 (RRSDSKESRKL) shows a compositional bias: basic and acidic residues.

This is an uncharacterized protein from Saccharomyces cerevisiae (strain ATCC 204508 / S288c) (Baker's yeast).